The sequence spans 322 residues: Myeloid-associated differentiation marker (322 aa).

The tract at residues Met1–Ile25 is disordered. The residue at position 22 (Ser22) is a Phosphoserine. 2 MARVEL domains span residues Ala31–Gly163 and Tyr168–Phe319. 8 helical membrane passes run Leu41 to Thr61, Phe70 to Leu90, Phe101 to Pro121, Ala137 to Trp157, Thr171 to Ile191, Leu203 to Leu223, Phe239 to Pro259, and Leu294 to Ser314.

The protein belongs to the MAL family.

Its subcellular location is the membrane. This chain is Myeloid-associated differentiation marker (MYADM), found in Pongo abelii (Sumatran orangutan).